A 616-amino-acid polypeptide reads, in one-letter code: Replication protein A 70 kDa DNA-binding subunit (616 aa).

Met1 carries the N-acetylmethionine modification. Glycyl lysine isopeptide (Lys-Gly) (interchain with G-Cter in ubiquitin) cross-links involve residues Lys22 and Lys88. Residues Gly121–Val155 are disordered. A compositionally biased stretch (low complexity) spans Ala134–Gln145. Over residues Asn146–Val155 the composition is skewed to polar residues. N6-acetyllysine; alternate occurs at positions 163 and 167. Glycyl lysine isopeptide (Lys-Gly) (interchain with G-Cter in ubiquitin); alternate cross-links involve residues Lys163 and Lys167. Thr180 bears the Phosphothreonine mark. Residue Lys183 forms a Glycyl lysine isopeptide (Lys-Gly) (interchain with G-Cter in ubiquitin) linkage. At Thr191 the chain carries Phosphothreonine. Residues Trp197 to Asn281 constitute a DNA-binding region (OB). Glycyl lysine isopeptide (Lys-Gly) (interchain with G-Cter in ubiquitin) cross-links involve residues Lys220 and Lys244. Lys259 is subject to N6-acetyllysine; alternate. Lys259 is covalently cross-linked (Glycyl lysine isopeptide (Lys-Gly) (interchain with G-Cter in ubiquitin); alternate). Residues Lys267 and Lys331 each participate in a glycyl lysine isopeptide (Lys-Gly) (interchain with G-Cter in ubiquitin) cross-link. Phosphoserine is present on Ser384. Residues Lys410 and Lys431 each participate in a glycyl lysine isopeptide (Lys-Gly) (interchain with G-Cter in ubiquitin) cross-link. A Glycyl lysine isopeptide (Lys-Gly) (interchain with G-Cter in SUMO) cross-link involves residue Lys449. A Glycyl lysine isopeptide (Lys-Gly) (interchain with G-Cter in ubiquitin) cross-link involves residue Lys458. Residues Cys481–Cys503 form a C4-type zinc finger. Lys553 participates in a covalent cross-link: Glycyl lysine isopeptide (Lys-Gly) (interchain with G-Cter in ubiquitin). A Glycyl lysine isopeptide (Lys-Gly) (interchain with G-Cter in SUMO) cross-link involves residue Lys577.

Belongs to the replication factor A protein 1 family. Component of the canonical replication protein A complex (RPA), a heterotrimer composed of RPA1, RPA2 and RPA3. The DNA-binding activity may reside exclusively on the RPA1 subunit. Interacts with PRPF19; the PRP19-CDC5L complex is recruited to the sites of DNA repair where it ubiquitinates the replication protein A complex (RPA). Interacts with RIPK1. Interacts with the polymerase alpha subunit POLA1/p180; this interaction stabilizes the replicative complex and reduces the misincorporation rate of DNA polymerase alpha by acting as a fidelity clamp. Interacts with RAD51 and SENP6 to regulate DNA repair. Interacts with HELB; this interaction promotes HELB recruitment to chromatin following DNA damage. Interacts with PRIMPOL; leading to recruit PRIMPOL on chromatin and stimulate its DNA primase activity. Interacts with XPA; the interaction is direct and associates XPA with the RPA complex. Interacts with ETAA1; the interaction is direct and promotes ETAA1 recruitment at stalled replication forks. Interacts with RPA1; this interaction associates HROB with the RPA complex. Interacts (when poly-ADP-ribosylated) with HTATSF1. DNA damage-induced 'Lys-63'-linked polyubiquitination by PRPF19 mediates ATRIP recruitment to the RPA complex at sites of DNA damage and activation of ATR. Ubiquitinated by RFWD3 at stalled replication forks in response to DNA damage: ubiquitination by RFWD3 does not lead to degradation by the proteasome and promotes removal of the RPA complex from stalled replication forks, promoting homologous recombination. Post-translationally, sumoylated on lysine residues Lys-449 and Lys-577, with Lys-449 being the major site. Sumoylation promotes recruitment of RAD51 to the DNA damage foci to initiate DNA repair through homologous recombination. Desumoylated by SENP6. In terms of processing, poly-ADP-ribosylated by PARP1; promoting recruitment of HTATSF1.

Its subcellular location is the nucleus. It localises to the PML body. Functionally, as part of the heterotrimeric replication protein A complex (RPA/RP-A), binds and stabilizes single-stranded DNA intermediates, that form during DNA replication or upon DNA stress. It prevents their reannealing and in parallel, recruits and activates different proteins and complexes involved in DNA metabolism. Thereby, it plays an essential role both in DNA replication and the cellular response to DNA damage. In the cellular response to DNA damage, the RPA complex controls DNA repair and DNA damage checkpoint activation. Through recruitment of ATRIP activates the ATR kinase a master regulator of the DNA damage response. It is required for the recruitment of the DNA double-strand break repair factors RAD51 and RAD52 to chromatin in response to DNA damage. Also recruits to sites of DNA damage proteins like XPA and XPG that are involved in nucleotide excision repair and is required for this mechanism of DNA repair. Also plays a role in base excision repair (BER) probably through interaction with UNG. Also recruits SMARCAL1/HARP, which is involved in replication fork restart, to sites of DNA damage. May also play a role in telomere maintenance. The polypeptide is Replication protein A 70 kDa DNA-binding subunit (RPA1) (Pongo abelii (Sumatran orangutan)).